The following is a 256-amino-acid chain: Small ribosomal subunit protein eS1 (256 aa).

Alanine 2 is subject to N-acetylalanine; partial.

Belongs to the eukaryotic ribosomal protein eS1 family. In terms of assembly, component of the small ribosomal subunit. Mature ribosomes consist of a small (40S) and a large (60S) subunit. The 40S subunit contains about 33 different proteins and 1 molecule of RNA (18S). The 60S subunit contains about 49 different proteins and 3 molecules of RNA (25S, 5.8S and 5S).

The protein localises to the cytoplasm. This Candida tropicalis (strain ATCC MYA-3404 / T1) (Yeast) protein is Small ribosomal subunit protein eS1.